Here is a 727-residue protein sequence, read N- to C-terminus: Zinc metalloproteinase nas-38 (727 aa).

An N-terminal signal peptide occupies residues 1-25 (MPSPSYNRHIIIASCFCCLLIFSSA). Positions 26 to 114 (ARVPKASKKH…FTQGKREKRK (89 aa)) are excised as a propeptide. The Peptidase M12A domain occupies 113–312 (RKIGRNPLYK…QAINMAYGCT (200 aa)). Cystine bridges form between Cys-158–Cys-311 and Cys-179–Cys-199. A Zn(2+)-binding site is contributed by His-207. Glu-208 is an active-site residue. Residues His-211 and His-217 each coordinate Zn(2+). Positions 306–345 (NMAYGCTESCADLPCLRNGYTHPNNCSMCACPEGLSGRYC) constitute an EGF-like domain. A glycan (N-linked (GlcNAc...) asparagine) is linked at Asn-330. Positions 353-469 (AQCGGVIFAT…AGFKAKFWSN (117 aa)) constitute a CUB domain. 2 disulfide bridges follow: Cys-355/Cys-383 and Cys-411/Cys-432. Disordered regions lie at residues 473–506 (PEGVSTPLPPTTAPLPEISETTQKPEPTTVQSTT) and 532–561 (TPLTSSSTTTESTTVSSTTQSTTWLPTEPS). Residues 535-554 (TSSSTTTESTTVSSTTQSTT) are compositionally biased toward low complexity. The TSP type-1 domain maps to 610–658 (ECGCGAWSEWQGECSQQCGGCGHRLRKRECKKEACRKEEKRPCNFSACP). Disulfide bonds link Cys-611/Cys-644, Cys-623/Cys-652, Cys-627/Cys-657, and Cys-639/Cys-644. 2 N-linked (GlcNAc...) asparagine glycosylation sites follow: Asn-653 and Asn-714.

Zn(2+) serves as cofactor. As to expression, expressed in the epidermis, the excretory canal cell, duct cell, pore cell, and excretory gland cell. Expressed in an oscillating pattern in epithelial cells with increased expression during the lethargus phase which occurs during molting between larval and adult stages. Not expressed in seam cells or in the RIS neuron.

It is found in the secreted. In terms of biological role, metalloprotease. As part of the innate immune response to molting and injury to the adult epidermis, positively regulates the activity of the transcription factor sta-2 to promote the expression of epidermal antimicrobial peptides such as nlp-29. Through regulating the expression of epidermal antimicrobial peptides such as nlp-29, modulates sleep duration and locomotion quiescence during the sleep-like state called lethargus which occurs during molting between larval and adult stages. This may occur through the sleep-active RIS neuron. This Caenorhabditis elegans protein is Zinc metalloproteinase nas-38.